The sequence spans 568 residues: Sulfite reductase [NADPH] hemoprotein beta-component (568 aa).

[4Fe-4S] cluster is bound by residues C426, C432, C471, and C475. C475 serves as a coordination point for siroheme.

Belongs to the nitrite and sulfite reductase 4Fe-4S domain family. In terms of assembly, alpha(8)-beta(8). The alpha component is a flavoprotein, the beta component is a hemoprotein. Requires siroheme as cofactor. It depends on [4Fe-4S] cluster as a cofactor.

It catalyses the reaction hydrogen sulfide + 3 NADP(+) + 3 H2O = sulfite + 3 NADPH + 4 H(+). The protein operates within sulfur metabolism; hydrogen sulfide biosynthesis; hydrogen sulfide from sulfite (NADPH route): step 1/1. Its function is as follows. Component of the sulfite reductase complex that catalyzes the 6-electron reduction of sulfite to sulfide. This is one of several activities required for the biosynthesis of L-cysteine from sulfate. This chain is Sulfite reductase [NADPH] hemoprotein beta-component, found in Xylella fastidiosa (strain 9a5c).